A 335-amino-acid chain; its full sequence is 3-hydroxyisobutyrate dehydrogenase, mitochondrial (335 aa).

Residues 1–35 constitute a mitochondrion transit peptide; sequence MAASLGFRGAASGLWYWSGRRRPVGSLAAVCSRSM. NAD(+) is bound at residue 39-68; it reads TPVGFIGLGNMGNPMAKNLMKHGYPLILYD. 3 positions are modified to N6-acetyllysine; alternate: Lys59, Lys75, and Lys78. Residues Lys59, Lys75, and Lys78 each carry the N6-succinyllysine; alternate modification. Position 94 is an N6-succinyllysine (Lys94). NAD(+) contacts are provided by residues 102–103 and Asn107; that span reads LP. Lys120 carries the N6-acetyllysine modification. Residue Thr133 participates in NAD(+) binding. Lys140 is subject to N6-succinyllysine. Lys144 carries the post-translational modification N6-acetyllysine. N6-acetyllysine; alternate is present on Lys148. Residue Lys148 is modified to N6-succinyllysine; alternate. Residue Lys208 is part of the active site. Lys237 and Lys241 each carry N6-acetyllysine; alternate. Residues Lys237 and Lys241 each carry the N6-succinyllysine; alternate modification. NAD(+) is bound at residue Lys283. Lys296 carries the post-translational modification N6-succinyllysine. At Lys320 the chain carries N6-acetyllysine; alternate. At Lys320 the chain carries N6-succinyllysine; alternate.

This sequence belongs to the HIBADH-related family. 3-hydroxyisobutyrate dehydrogenase subfamily. Homodimer.

Its subcellular location is the mitochondrion. It catalyses the reaction 3-hydroxy-2-methylpropanoate + NAD(+) = 2-methyl-3-oxopropanoate + NADH + H(+). It functions in the pathway amino-acid degradation; L-valine degradation. The sequence is that of 3-hydroxyisobutyrate dehydrogenase, mitochondrial (Hibadh) from Mus musculus (Mouse).